Here is a 209-residue protein sequence, read N- to C-terminus: Large ribosomal subunit protein uL3 (209 aa).

A disordered region spans residues 133 to 153 (THGNSLSHRVPGSIGQNQTPG). Position 150 is an N5-methylglutamine (Gln-150).

This sequence belongs to the universal ribosomal protein uL3 family. Part of the 50S ribosomal subunit. Forms a cluster with proteins L14 and L19. Methylated by PrmB.

In terms of biological role, one of the primary rRNA binding proteins, it binds directly near the 3'-end of the 23S rRNA, where it nucleates assembly of the 50S subunit. This is Large ribosomal subunit protein uL3 from Serratia proteamaculans (strain 568).